We begin with the raw amino-acid sequence, 607 residues long: MNKEERAKRQSKIRNFSIIAHIDHGKSTLADRILEKTNALTQREMKAQLLDSMDLERERGITIKLNAVQLNYKAKDGEEYILHLIDTPGHVDFTYEVSRSLAACEGAILVVDAAQGIEAQTLANVYLALDNNLEILPVINKIDLPSADPERVRQEVEDVIGLDASEAVLASAKAGIGIEEILEQIVEKVPAPAGDSEEPLQCMIFDSLYDPYRGVIAYIRVVNGTVKVGDKVRMMATGKEFEVTEVGVFTPKTTQRDELTVGDVGFLAASIKNVGDTRVGDTITHAKRPAAEPLAGYRKLNPMVFCGLYPIDSARYNDLRDALEKLELNDSALEFEPETSQALGFGFRCGFLGLLHMEIIQERIEREFKIDLITTAPSVIYKVYLTNGEDVIVDNPSNMPDPQSIDRVEEPFVKASIMVPNDYVGAVMEICQGKRGTFIDMQYLDETRVTLTYEIPLSEIVYDFFDQLKSNTKGYASFDYELIGYKPSKLVKMDILLNNEQVDALSFIVHRDSAYDRGKVIVEKLKELIPRQQFEVPIQATIGNKVVARSTIKAMRKNVLAKCYGGDISRKRKLLDKQKESKKRMKSVGSVEVPQEAFMAVLKMDDN.

Positions 11–193 (SKIRNFSIIA…QIVEKVPAPA (183 aa)) constitute a tr-type G domain. GTP is bound by residues 23 to 28 (DHGKST) and 140 to 143 (NKID).

It belongs to the TRAFAC class translation factor GTPase superfamily. Classic translation factor GTPase family. LepA subfamily.

The protein localises to the cell membrane. The catalysed reaction is GTP + H2O = GDP + phosphate + H(+). Functionally, required for accurate and efficient protein synthesis under certain stress conditions. May act as a fidelity factor of the translation reaction, by catalyzing a one-codon backward translocation of tRNAs on improperly translocated ribosomes. Back-translocation proceeds from a post-translocation (POST) complex to a pre-translocation (PRE) complex, thus giving elongation factor G a second chance to translocate the tRNAs correctly. Binds to ribosomes in a GTP-dependent manner. This Bacillus cereus (strain ATCC 14579 / DSM 31 / CCUG 7414 / JCM 2152 / NBRC 15305 / NCIMB 9373 / NCTC 2599 / NRRL B-3711) protein is Elongation factor 4.